We begin with the raw amino-acid sequence, 394 residues long: Phosphopentomutase (394 aa).

Residues aspartate 15, aspartate 288, histidine 293, aspartate 329, histidine 330, and histidine 341 each contribute to the Mn(2+) site.

It belongs to the phosphopentomutase family. Mn(2+) is required as a cofactor.

Its subcellular location is the cytoplasm. It carries out the reaction 2-deoxy-alpha-D-ribose 1-phosphate = 2-deoxy-D-ribose 5-phosphate. It catalyses the reaction alpha-D-ribose 1-phosphate = D-ribose 5-phosphate. It functions in the pathway carbohydrate degradation; 2-deoxy-D-ribose 1-phosphate degradation; D-glyceraldehyde 3-phosphate and acetaldehyde from 2-deoxy-alpha-D-ribose 1-phosphate: step 1/2. Functionally, isomerase that catalyzes the conversion of deoxy-ribose 1-phosphate (dRib-1-P) and ribose 1-phosphate (Rib-1-P) to deoxy-ribose 5-phosphate (dRib-5-P) and ribose 5-phosphate (Rib-5-P), respectively. This Bacillus pumilus (strain SAFR-032) protein is Phosphopentomutase.